A 399-amino-acid chain; its full sequence is Chorismate synthase (399 aa).

2 residues coordinate NADP(+): arginine 40 and arginine 46. FMN contacts are provided by residues 135–137 (RAS), 256–257 (QA), glycine 301, 316–320 (KPIAT), and arginine 342.

It belongs to the chorismate synthase family. As to quaternary structure, homotetramer. Requires FMNH2 as cofactor.

The enzyme catalyses 5-O-(1-carboxyvinyl)-3-phosphoshikimate = chorismate + phosphate. It participates in metabolic intermediate biosynthesis; chorismate biosynthesis; chorismate from D-erythrose 4-phosphate and phosphoenolpyruvate: step 7/7. Functionally, catalyzes the anti-1,4-elimination of the C-3 phosphate and the C-6 proR hydrogen from 5-enolpyruvylshikimate-3-phosphate (EPSP) to yield chorismate, which is the branch point compound that serves as the starting substrate for the three terminal pathways of aromatic amino acid biosynthesis. This reaction introduces a second double bond into the aromatic ring system. This chain is Chorismate synthase, found in Pseudarthrobacter chlorophenolicus (strain ATCC 700700 / DSM 12829 / CIP 107037 / JCM 12360 / KCTC 9906 / NCIMB 13794 / A6) (Arthrobacter chlorophenolicus).